The following is a 326-amino-acid chain: MAEGLVLKGIMRAHTDIVTAIATPIDNSDIIVTASRDKSIILWKLTKDDKSYGVAQRRLTGHSHFVEDVVLSSDGQFALSGSWDGELRLWDLATGETTRRFVGHTKDVLSVAFSTDNRQIVSASRDRTIKLWNTLGECKYTISEGDGHKEWVSCVRFSPNTLVPTIVSASWDKTVKVWNLQNCKLRNSLVGHSGYLNTVAVSPDGSLCASGGKDGVILLWDLAEGKKLYSLEAGSIIHSLCFSPNRYWLCAATENSIRIWDLESKSVVEDLKVDLKSEAEKNEGGVGTGNQKKVIYCTSLNWSADGSTLFSGYTDGVVRVWGIGRY.

7 WD repeats span residues A13 to G53, G61 to R100, G103 to I142, G147 to S188, G191 to S230, E232 to D270, and N290 to Y326.

This sequence belongs to the WD repeat G protein beta family. Ribosomal protein RACK1 subfamily. As to quaternary structure, homodimer and heterodimer with RACK1A or RACK1B. Interacts with GB1, MEKK1, MKK4, MKK5, MPK3 and MPK6, but not with GPA1 or MPK4. In terms of tissue distribution, widely expressed.

In terms of biological role, minor component of the RACK1 regulatory proteins that play a role in multiple signal transduction pathways. Involved in multiple hormone responses and developmental processes. MAPK cascade scaffolding protein involved in the protease IV and ArgC signaling pathway but not the flg22 pathway. This is Small ribosomal subunit protein RACK1x from Arabidopsis thaliana (Mouse-ear cress).